A 326-amino-acid chain; its full sequence is UDP-3-O-acylglucosamine N-acyltransferase (326 aa).

His-225 acts as the Proton acceptor in catalysis.

This sequence belongs to the transferase hexapeptide repeat family. LpxD subfamily. In terms of assembly, homotrimer.

The catalysed reaction is a UDP-3-O-[(3R)-3-hydroxyacyl]-alpha-D-glucosamine + a (3R)-hydroxyacyl-[ACP] = a UDP-2-N,3-O-bis[(3R)-3-hydroxyacyl]-alpha-D-glucosamine + holo-[ACP] + H(+). Its pathway is bacterial outer membrane biogenesis; LPS lipid A biosynthesis. In terms of biological role, catalyzes the N-acylation of UDP-3-O-acylglucosamine using 3-hydroxyacyl-ACP as the acyl donor. Is involved in the biosynthesis of lipid A, a phosphorylated glycolipid that anchors the lipopolysaccharide to the outer membrane of the cell. This Verminephrobacter eiseniae (strain EF01-2) protein is UDP-3-O-acylglucosamine N-acyltransferase.